A 443-amino-acid chain; its full sequence is Chromosomal replication initiator protein DnaA (443 aa).

Residues 1–76 (METKALWEKL…KSVLNSYVSV (76 aa)) are domain I, interacts with DnaA modulators. The interval 76–99 (VDFLTKEIFEKNTKKENKKEPINT) is domain II. A domain III, AAA+ region region spans residues 100–320 (VLSENALTFE…GLVNRLLFFG (221 aa)). Gly-145, Gly-147, Lys-148, and Thr-149 together coordinate ATP. Residues 321–443 (IQNDLGHIID…ESLKNEIIGK (123 aa)) are domain IV, binds dsDNA.

Belongs to the DnaA family. As to quaternary structure, oligomerizes as a right-handed, spiral filament on DNA at oriC.

Its subcellular location is the cytoplasm. Functionally, plays an essential role in the initiation and regulation of chromosomal replication. ATP-DnaA binds to the origin of replication (oriC) to initiate formation of the DNA replication initiation complex once per cell cycle. Binds the DnaA box (a 9 base pair repeat at the origin) and separates the double-stranded (ds)DNA. Forms a right-handed helical filament on oriC DNA; dsDNA binds to the exterior of the filament while single-stranded (ss)DNA is stabiized in the filament's interior. The ATP-DnaA-oriC complex binds and stabilizes one strand of the AT-rich DNA unwinding element (DUE), permitting loading of DNA polymerase. After initiation quickly degrades to an ADP-DnaA complex that is not apt for DNA replication. Binds acidic phospholipids. This chain is Chromosomal replication initiator protein DnaA, found in Mesoplasma florum (strain ATCC 33453 / NBRC 100688 / NCTC 11704 / L1) (Acholeplasma florum).